The chain runs to 349 residues: Glycerol-3-phosphate dehydrogenase [NAD(P)+] (349 aa).

Residues W20, R43, R44, and K117 each contribute to the NADPH site. The sn-glycerol 3-phosphate site is built by K117 and G147. A151 serves as a coordination point for NADPH. Sn-glycerol 3-phosphate-binding residues include K202, D255, S265, R266, and N267. K202 (proton acceptor) is an active-site residue. Position 266 (R266) interacts with NADPH. V297 and E299 together coordinate NADPH.

The protein belongs to the NAD-dependent glycerol-3-phosphate dehydrogenase family.

Its subcellular location is the cytoplasm. The enzyme catalyses sn-glycerol 3-phosphate + NAD(+) = dihydroxyacetone phosphate + NADH + H(+). It carries out the reaction sn-glycerol 3-phosphate + NADP(+) = dihydroxyacetone phosphate + NADPH + H(+). It participates in membrane lipid metabolism; glycerophospholipid metabolism. Functionally, catalyzes the reduction of the glycolytic intermediate dihydroxyacetone phosphate (DHAP) to sn-glycerol 3-phosphate (G3P), the key precursor for phospholipid synthesis. This is Glycerol-3-phosphate dehydrogenase [NAD(P)+] from Mycobacterium leprae (strain TN).